The chain runs to 363 residues: Ribonuclease P protein subunit p40 (363 aa).

Component of nuclear RNase P and RNase MRP ribonucleoproteins. RNase P consists of a catalytic RNA moiety and about 10 protein subunits; POP1, POP4, POP5, POP7, RPP14, RPP21, RPP25, RPP30, RPP38 and RPP40. Within the RNase P complex, POP1, POP7 and RPP25 form the 'finger' subcomplex, POP5, RPP14, RPP40 and homodimeric RPP30 form the 'palm' subcomplex, and RPP21, POP4 and RPP38 form the 'wrist' subcomplex. All subunits of the RNase P complex interact with the catalytic RNA. Several subunits of RNase P are also part of the RNase MRP complex. RNase MRP consists of a catalytic RNA moiety and about 8 protein subunits; POP1, POP7, RPP25, RPP30, RPP38, RPP40 and possibly also POP4 and POP5.

The protein resides in the nucleus. Its subcellular location is the nucleolus. Its function is as follows. Component of ribonuclease P, a ribonucleoprotein complex that generates mature tRNA molecules by cleaving their 5'-ends. Also a component of the MRP ribonuclease complex, which cleaves pre-rRNA sequences. The protein is Ribonuclease P protein subunit p40 (RPP40) of Homo sapiens (Human).